The following is a 123-amino-acid chain: Large ribosomal subunit protein uL14 (123 aa).

Belongs to the universal ribosomal protein uL14 family. In terms of assembly, part of the 50S ribosomal subunit. Forms a cluster with proteins L3 and L19. In the 70S ribosome, L14 and L19 interact and together make contacts with the 16S rRNA in bridges B5 and B8.

Its function is as follows. Binds to 23S rRNA. Forms part of two intersubunit bridges in the 70S ribosome. The chain is Large ribosomal subunit protein uL14 from Erwinia tasmaniensis (strain DSM 17950 / CFBP 7177 / CIP 109463 / NCPPB 4357 / Et1/99).